The chain runs to 284 residues: Averufin oxidase A (284 aa).

The signal sequence occupies residues 1–23 (MPTYALLGATGATGSAILRCLLA). Residues N62, N86, and N190 are each glycosylated (N-linked (GlcNAc...) asparagine).

Belongs to the avfA family.

It functions in the pathway mycotoxin biosynthesis. In terms of biological role, averufin oxidase A; part of the fragmented gene cluster that mediates the biosynthesis of dothistromin (DOTH), a polyketide toxin very similar in structure to the aflatoxin precursor, versicolorin B. The first step of the pathway is the conversion of acetate to norsolorinic acid (NOR) and requires the fatty acid synthase subunits hexA and hexB, as well as the polyketide synthase pksA. PksA combines a hexanoyl starter unit and 7 malonyl-CoA extender units to synthesize the precursor NOR. The hexanoyl starter unit is provided to the acyl-carrier protein (ACP) domain by the fungal fatty acid synthase hexA/hexB. The second step is the conversion of NOR to averantin (AVN) and requires the norsolorinic acid ketoreductase nor1, which catalyzes the dehydration of norsolorinic acid to form (1'S)-averantin. The cytochrome P450 monooxygenase avnA then catalyzes the hydroxylation of AVN to 5'hydroxyaverantin (HAVN). The next step is performed by adhA that transforms HAVN to averufin (AVF). Averufin might then be converted to hydroxyversicolorone by cypX and avfA. Hydroxyversicolorone is further converted versiconal hemiacetal acetate (VHA) by moxY. VHA is then the substrate for the versiconal hemiacetal acetate esterase est1 to yield versiconal (VAL). Versicolorin B synthase vbsA then converts VAL to versicolorin B (VERB) by closing the bisfuran ring. Then, the activity of the versicolorin B desaturase verB leads to versicolorin A (VERA). DotB, a predicted chloroperoxidase, may perform epoxidation of the A-ring of VERA. Alternatively, a cytochrome P450, such as cypX or avnA could catalyze this step. It is also possible that another, uncharacterized, cytochrome P450 enzyme is responsible for this step. Opening of the epoxide could potentially be achieved by the epoxide hydrolase epoA. However, epoA seems not to be required for DOTH biosynthesis, but other epoxide hydrolases may have the ability to complement this hydrolysis. Alternatively, opening of the epoxide ring could be achieved non-enzymatically. The next step is the deoxygenation of ring A to yield the 5,8-dihydroxyanthraquinone which is most likely catalyzed by the NADPH dehydrogenase encoded by ver1. The last stages of DOTH biosynthesis are proposed to involve hydroxylation of the bisfuran. OrdB and norB might have oxidative roles here. An alternative possibility is that cytochrome P450 monoogenases such as avnA and cypX might perform these steps in addition to previously proposed steps. The protein is Averufin oxidase A of Dothistroma septosporum (strain NZE10 / CBS 128990) (Red band needle blight fungus).